The chain runs to 273 residues: Ribosomal RNA small subunit methyltransferase A (273 aa).

S-adenosyl-L-methionine is bound by residues Asn18, Leu20, Gly45, Glu66, Asp91, and Asn113.

Belongs to the class I-like SAM-binding methyltransferase superfamily. rRNA adenine N(6)-methyltransferase family. RsmA subfamily.

Its subcellular location is the cytoplasm. The enzyme catalyses adenosine(1518)/adenosine(1519) in 16S rRNA + 4 S-adenosyl-L-methionine = N(6)-dimethyladenosine(1518)/N(6)-dimethyladenosine(1519) in 16S rRNA + 4 S-adenosyl-L-homocysteine + 4 H(+). Functionally, specifically dimethylates two adjacent adenosines (A1518 and A1519) in the loop of a conserved hairpin near the 3'-end of 16S rRNA in the 30S particle. May play a critical role in biogenesis of 30S subunits. This Shigella boydii serotype 4 (strain Sb227) protein is Ribosomal RNA small subunit methyltransferase A.